A 1126-amino-acid chain; its full sequence is Probable serine/threonine-protein kinase DDB_G0280111 (1126 aa).

Residues Leu-16–Phe-295 enclose the Protein kinase domain. Residues Ile-22–Val-30 and Lys-45 contribute to the ATP site. The active-site Proton acceptor is Asp-147. A compositionally biased stretch (low complexity) spans Asn-314–Ile-333. Disordered regions lie at residues Asn-314–Asn-469, Leu-760–Gln-901, Thr-944–Arg-1072, and Asn-1095–Asn-1126. Pro residues predominate over residues Thr-347–Ser-364. Residues Val-367–Pro-390 show a composition bias toward polar residues. Composition is skewed to low complexity over residues Pro-413–Asp-422, Asn-432–Asn-469, and Leu-760–Ser-795. Polar residues-rich tracts occupy residues Phe-796 to Gly-825 and Glu-833 to Ser-845. The span at Asn-846–Asn-856 shows a compositional bias: low complexity. Over residues Gly-857 to Ser-866 the composition is skewed to polar residues. Low complexity-rich tracts occupy residues Gln-886 to Gln-901, Pro-953 to Gln-971, and Asn-1003 to Leu-1035. Positions Asn-1095–Asn-1105 are enriched in polar residues. The span at Asp-1108–Asn-1126 shows a compositional bias: acidic residues.

The protein belongs to the protein kinase superfamily. Ser/Thr protein kinase family.

It carries out the reaction L-seryl-[protein] + ATP = O-phospho-L-seryl-[protein] + ADP + H(+). The enzyme catalyses L-threonyl-[protein] + ATP = O-phospho-L-threonyl-[protein] + ADP + H(+). The protein is Probable serine/threonine-protein kinase DDB_G0280111 of Dictyostelium discoideum (Social amoeba).